We begin with the raw amino-acid sequence, 76 residues long: MAKIIRIKGEILGKDEPMVFTKEYNVVKEDDALETMYSEMGSKHAVKRAYIKIVEVSEISEEDVQNPILKKTLEMY.

The protein belongs to the eukaryotic ribosomal protein eL20 family. Part of the 50S ribosomal subunit. Binds 23S rRNA.

The protein is Large ribosomal subunit protein eL20 of Methanococcus maripaludis (strain C7 / ATCC BAA-1331).